The sequence spans 426 residues: MLDPTLLRQQLAKLAECLLTVRGFTLDVAALEALESERKRIQVHTQELQSLRNSKSKAIGQARSKGEDVSALMAEVAAFSDDLKASEIALEEIRTELEKVALDIPNLPQQDVPLGADERDNVEQARWGVPRTFDFAIKDHVELGACHGWLDAESAAKLSGARFTVLRGPIARLHRALAQCMLDLHVSQHGYEEVNVPIIVNADSLHGTGQLPKFEEDMFSTQLGEHRRYLISTSEISLTNLVRNEIIEADRLPLRMVAHSLCFRSEAGSGGRDTRGMIRQHQFEKVELVSVCKPQDSEGEHHRMTRCAETVLEMLGLPYRKILLCTGDMGFAATKTYDLEVWLPSQGMYREISSCSNCGDFQARRMQARWRNSVTGKPELVHTLNGSGVAVGRAMIAVMENYQNADGSITVPEVLRPYMDGLSRIG.

233–235 (TSE) is an L-serine binding site. 264–266 (RSE) lines the ATP pocket. L-serine is bound at residue Glu-287. 351–354 (EISS) lines the ATP pocket. An L-serine-binding site is contributed by Ser-387.

It belongs to the class-II aminoacyl-tRNA synthetase family. Type-1 seryl-tRNA synthetase subfamily. In terms of assembly, homodimer. The tRNA molecule binds across the dimer.

Its subcellular location is the cytoplasm. It carries out the reaction tRNA(Ser) + L-serine + ATP = L-seryl-tRNA(Ser) + AMP + diphosphate + H(+). The catalysed reaction is tRNA(Sec) + L-serine + ATP = L-seryl-tRNA(Sec) + AMP + diphosphate + H(+). The protein operates within aminoacyl-tRNA biosynthesis; selenocysteinyl-tRNA(Sec) biosynthesis; L-seryl-tRNA(Sec) from L-serine and tRNA(Sec): step 1/1. Catalyzes the attachment of serine to tRNA(Ser). Is also able to aminoacylate tRNA(Sec) with serine, to form the misacylated tRNA L-seryl-tRNA(Sec), which will be further converted into selenocysteinyl-tRNA(Sec). This chain is Serine--tRNA ligase, found in Xylella fastidiosa (strain M23).